We begin with the raw amino-acid sequence, 149 residues long: Aquaporin-like protein 2 (149 aa).

A disordered region spans residues 1-35 (MSNESNDLEKNISHLDPTGVDNAYIPPEQPETKHS). The Cytoplasmic portion of the chain corresponds to 1–47 (MSNESNDLEKNISHLDPTGVDNAYIPPEQPETKHSRFNIDRDTLRNH). A helical membrane pass occupies residues 48–68 (FIAAVGEFCGTFMFLWCAYVI). Over 69 to 89 (CNVANHDVALTTEPEGSHPGQ) the chain is Extracellular. A helical transmembrane segment spans residues 90 to 110 (LIMIALGFGFSVMFSIWCFWW). The Cytoplasmic portion of the chain corresponds to 111-149 (GFEPSRFSLFVFGQSHLSSQMCSDVVSSDHCWDGCWWCR).

Belongs to the MIP/aquaporin (TC 1.A.8) family.

The protein resides in the endoplasmic reticulum membrane. The protein localises to the cell membrane. Functionally, water channel required to facilitate the transport of water across membranes. Involved in freeze tolerance, osmotolerance and cell flocculation in liquid cultures. Is non-functional in most laboratory strains. This is Aquaporin-like protein 2 (AQY2-2) from Saccharomyces cerevisiae (strain RM11-1a) (Baker's yeast).